A 105-amino-acid chain; its full sequence is Pyrimidine/purine nucleoside phosphorylase (105 aa).

Belongs to the nucleoside phosphorylase PpnP family.

It catalyses the reaction a purine D-ribonucleoside + phosphate = a purine nucleobase + alpha-D-ribose 1-phosphate. The catalysed reaction is adenosine + phosphate = alpha-D-ribose 1-phosphate + adenine. The enzyme catalyses cytidine + phosphate = cytosine + alpha-D-ribose 1-phosphate. It carries out the reaction guanosine + phosphate = alpha-D-ribose 1-phosphate + guanine. It catalyses the reaction inosine + phosphate = alpha-D-ribose 1-phosphate + hypoxanthine. The catalysed reaction is thymidine + phosphate = 2-deoxy-alpha-D-ribose 1-phosphate + thymine. The enzyme catalyses uridine + phosphate = alpha-D-ribose 1-phosphate + uracil. It carries out the reaction xanthosine + phosphate = alpha-D-ribose 1-phosphate + xanthine. Catalyzes the phosphorolysis of diverse nucleosides, yielding D-ribose 1-phosphate and the respective free bases. Can use uridine, adenosine, guanosine, cytidine, thymidine, inosine and xanthosine as substrates. Also catalyzes the reverse reactions. The sequence is that of Pyrimidine/purine nucleoside phosphorylase from Wolinella succinogenes (strain ATCC 29543 / DSM 1740 / CCUG 13145 / JCM 31913 / LMG 7466 / NCTC 11488 / FDC 602W) (Vibrio succinogenes).